Consider the following 181-residue polypeptide: Inner membrane-spanning protein YciB (181 aa).

The next 5 membrane-spanning stretches (helical) occupy residues 3-23 (FLFDLFPVILFFITFKIYGIY), 49-69 (TMLWVSLVLIVVFGSATLILQ), 76-96 (WKPSVLYWLFAAALLIAQAIF), 119-139 (VNASWAAFFAFMGAANLYVAF), and 149-169 (FKLFGFMGLMLVFVVLQGLML).

Belongs to the YciB family.

Its subcellular location is the cell inner membrane. Its function is as follows. Plays a role in cell envelope biogenesis, maintenance of cell envelope integrity and membrane homeostasis. The polypeptide is Inner membrane-spanning protein YciB (Nitrosospira multiformis (strain ATCC 25196 / NCIMB 11849 / C 71)).